Here is a 472-residue protein sequence, read N- to C-terminus: FAD-dependent monooxygenase ltmM (472 aa).

A helical transmembrane segment spans residues 7 to 27; sequence VIIVGGSVAGLSLAHCLEKIG. FAD is bound by residues Glu-34, Gly-48, and Arg-107. Asn-186 carries an N-linked (GlcNAc...) asparagine glycan. The FAD site is built by Asp-306 and Ala-319. The chain crosses the membrane as a helical span at residues 450-470; that stretch reads IVYALYLVAAAAFILYCLSSL.

This sequence belongs to the paxM FAD-dependent monooxygenase family. It depends on FAD as a cofactor.

It is found in the membrane. It participates in secondary metabolite biosynthesis. In terms of biological role, FAD-dependent monooxygenase; part of the gene cluster that mediates the biosynthesis of lolitrems, indole-diterpene mycotoxins that are potent tremorgens in mammals, and are synthesized by clavicipitaceous fungal endophytes in association with their grass hosts. The geranylgeranyl diphosphate (GGPP) synthase ltmG is proposed to catalyze the first step in lolitrem biosynthesis. LtmG catalyzes a series of iterative condensations of isopentenyl diphosphate (IPP) with dimethylallyl diphosphate (DMAPP), geranyl diphosphate (GPP), and farnesyl diphosphate (FPP), to form GGPP. GGPP then condenses with indole-3-glycerol phosphate to form 3-geranylgeranylindole, an acyclic intermediate, to be incorporated into paxilline. Either ltmG or ltmC could be responsible for this step, as both are putative prenyl transferases. The FAD-dependent monooxygenase ltmM then catalyzes the epoxidation of the two terminal alkenes of the geranylgeranyl moiety, which is subsequently cyclized by ltmC, to paspaline. The cytochrome P450 monooxygenases ltmQ and ltmP can sequentially oxidize paspaline to terpendole E and terpendole F. Alternatively, ltmP converts paspaline to an intermediate which is oxidized by ltmQ to terpendole F. LtmF, ltmK, ltmE and ltmJ appear to be unique to the epichloe endophytes. The prenyltransferase ltmF is involved in the 27-hydroxyl-O-prenylation. The cytochrome P450 monooxygenase ltmK is required for the oxidative acetal ring formation. The multi-functional prenyltransferase ltmE is required for C20- and C21-prenylations of the indole ring of paspalanes and acts together with the cytochrome P450 monooxygenase ltmJ to yield lolitremanes by multiple oxidations and ring closures. The stereoisomer pairs of lolitriol and lolitrem N or lolitrem B and lolitrem F may be attributed to variations in the way in which ring closure can occur under the action of ltmJ. While the major product of this pathway is lolitrem B, the prenyl transferases and cytochrome P450 monooxygenases identified in this pathway have a remarkable versatility in their regio- and stereo-specificities to generate a diverse range of metabolites that are products of a metabolic grid rather than a linear pathway. This chain is FAD-dependent monooxygenase ltmM (ltmM), found in Epichloe festucae (strain Fl1).